Reading from the N-terminus, the 364-residue chain is DNA replication and repair protein RecF (364 aa).

30–37 serves as a coordination point for ATP; the sequence is GDNGAGKT.

It belongs to the RecF family.

It localises to the cytoplasm. In terms of biological role, the RecF protein is involved in DNA metabolism; it is required for DNA replication and normal SOS inducibility. RecF binds preferentially to single-stranded, linear DNA. It also seems to bind ATP. The chain is DNA replication and repair protein RecF from Stenotrophomonas maltophilia (strain K279a).